We begin with the raw amino-acid sequence, 728 residues long: Prolyl 3-hydroxylase 1 (728 aa).

The first 14 residues, 1–14 (MVAVAAAAASRATA), serve as a signal peptide directing secretion. TPR repeat units follow at residues 25-58 (PDLL…RAAL), 135-168 (RSPY…NPEH), 197-230 (HMHE…YFVA), and 293-326 (PSHY…FPND). N-linked (GlcNAc...) asparagine glycosylation is present at asparagine 308. The stretch at 393–431 (KRLQEKQKSERETAVRISQEIGNLMKEIETLVEEKTKES) forms a coiled coil. N-linked (GlcNAc...) asparagine glycosylation is found at asparagine 450, asparagine 459, and asparagine 532. In terms of domain architecture, Fe2OG dioxygenase spans 556 to 670 (SHLVCRTAIE…RCAIALWFTL (115 aa)). Residues histidine 579, aspartate 581, and histidine 651 each coordinate Fe cation. Arginine 661 is an active-site residue. The disordered stretch occupies residues 691 to 728 (SPEEVDLPQEQPLPDQQGSPKPGEESLSDRESQPKDEL). Positions 698-707 (PQEQPLPDQQ) are enriched in low complexity. A compositionally biased stretch (basic and acidic residues) spans 712–728 (PGEESLSDRESQPKDEL). The Prevents secretion from ER motif lies at 725-728 (KDEL).

Belongs to the leprecan family. Requires Fe cation as cofactor. It depends on L-ascorbate as a cofactor. O-glycosylated; chondroitin sulfate. As to expression, expressed in basement membranes of cardiac muscle, skeletal muscle, central nervous system, intestinal tract, trachea, ear, skin, liver and kidney. In kidney, localizes to the glomerular basement membrane, mesangial matrix and Bowman's capsule of the nephron. In the renal parenchyma, expressed in the basement membranes of tubules and blood vessels. In the ear and trachea, localizes to the perimeter of resident chondrocytes in lacunae.

It is found in the endoplasmic reticulum. The protein resides in the secreted. Its subcellular location is the extracellular space. The protein localises to the extracellular matrix. The catalysed reaction is L-prolyl-[collagen] + 2-oxoglutarate + O2 = trans-3-hydroxy-L-prolyl-[collagen] + succinate + CO2. Its function is as follows. Basement membrane-associated chondroitin sulfate proteoglycan (CSPG). Has prolyl 3-hydroxylase activity catalyzing the post-translational formation of 3-hydroxyproline in -Xaa-Pro-Gly- sequences in collagens, especially types IV and V. May be involved in the secretory pathway of cells. Has growth suppressive activity in fibroblasts. This is Prolyl 3-hydroxylase 1 from Rattus norvegicus (Rat).